We begin with the raw amino-acid sequence, 622 residues long: Intermediate filament protein ifc-2 (622 aa).

Residues 19 to 54 (SGTYASGFGQLVSGMSSAGAICTTQIRDAREREKRE) form a head region. The IF rod domain occupies 51–399 (EKREIGLLND…ILLNGANVTT (349 aa)). Residues 55–86 (IGLLNDRLADYIEKVRFLEAQNRCLSHDIDIL) are coil 1A. The segment at 87–99 (RNGFSGGGHVSGL) is linker 1. The tract at residues 100 to 237 (FDAEINQAKH…TENNVRIEQE (138 aa)) is coil 1B. Residues 238 to 255 (LVFIRRDTTADNRDYFRH) form a linker 12 region. Residues 256–399 (ELQAAIRDIR…ILLNGANVTT (144 aa)) are coil 2. The tract at residues 400 to 550 (YTSNTHGSGS…RVDVGGFRIE (151 aa)) is tail. An LTD domain is found at 509–622 (SGRHFHSWYL…EERAWFVYLD (114 aa)).

Belongs to the intermediate filament family. As to expression, expressed in intestinal cells and at desmosomes in intestine and pharynx of the larva.

Its subcellular location is the cytoplasm. In terms of biological role, cytoplasmic intermediate filaments provide mechanical strength to cells. Not essential protein, although its absence leads to mild defects in locomotion. The chain is Intermediate filament protein ifc-2 (ifc-2) from Caenorhabditis elegans.